Consider the following 121-residue polypeptide: NADH-quinone oxidoreductase subunit A 2 (121 aa).

3 helical membrane-spanning segments follow: residues 6-26 (FLPVLFMVTGIVLVAAATLFV), 60-80 (VPFFILAILLVVFDVEAMFLF), and 89-109 (IGFVGYIEMFVFMLLLLVGFA).

This sequence belongs to the complex I subunit 3 family. In terms of assembly, NDH-1 is composed of 14 different subunits. Subunits NuoA, H, J, K, L, M, N constitute the membrane sector of the complex.

It localises to the cell inner membrane. The enzyme catalyses a quinone + NADH + 5 H(+)(in) = a quinol + NAD(+) + 4 H(+)(out). In terms of biological role, NDH-1 shuttles electrons from NADH, via FMN and iron-sulfur (Fe-S) centers, to quinones in the respiratory chain. The immediate electron acceptor for the enzyme in this species is believed to be ubiquinone. Couples the redox reaction to proton translocation (for every two electrons transferred, four hydrogen ions are translocated across the cytoplasmic membrane), and thus conserves the redox energy in a proton gradient. The protein is NADH-quinone oxidoreductase subunit A 2 of Rhizobium meliloti (strain 1021) (Ensifer meliloti).